Consider the following 274-residue polypeptide: Protein TIFY 11A (274 aa).

Disordered stretches follow at residues 49-95 (SLAL…SQPG) and 139-176 (PINDENNNNKSSMVLPDLNEPTDNNHLTKEQQQQQEQN). Residues 92–127 (SQPGSSQLTIFFGGKVLVYNEFPVDKAKEIMEVAKQ) form the Tify domain. Positions 139-150 (PINDENNNNKSS) are enriched in polar residues. Residues 161–185 (DNNHLTKEQQQQQEQNQIVERIARR) adopt a coiled-coil conformation. A Jas motif is present at residues 182-206 (IARRASLHRFFAKRKDRAVARAPYQ). The short motif at 183–190 (ARRASLHR) is the Nuclear localization signal element. Residues 206–274 (QVNQNAGHHR…QSSKDLDLRL (69 aa)) are disordered. Residues 249–274 (IKSDGDKDDIMKIEEGQSSKDLDLRL) are compositionally biased toward basic and acidic residues.

This sequence belongs to the TIFY/JAZ family. As to quaternary structure, homo- and heterodimer. Interacts with MYC2, MYC3, MYC4, AFPH2/NINJA, TIFY10A/JAZ1, TIFY10B/JAZ2, TIFY11B/JAZ6, TIFY5A/JAZ8 and TIFY3B/JAZ12. (Microbial infection) Interacts with the pathogenic Pseudomonas syringae HopZ1a protein. In terms of processing, (Microbial infection) Acetylated by Pseudomonas syringae HopZ1a. Ubiquitinated. Targeted for degradation by the SCF(COI1) E3 ubiquitin ligase-proteasome pathway during jasmonate signaling.

The protein resides in the nucleus. In terms of biological role, repressor of jasmonate responses. This Arabidopsis thaliana (Mouse-ear cress) protein is Protein TIFY 11A.